A 784-amino-acid chain; its full sequence is Toll-like receptor 2 (784 aa).

An N-terminal signal peptide occupies residues 1 to 20 (MPRALWTAWVWAXIILSTEG). The Extracellular portion of the chain corresponds to 21-587 (ASDQASSLSC…ARLSLSECHR (567 aa)). The cysteines at positions 30 and 36 are disulfide-linked. LRR repeat units lie at residues 54-77 (VKSLDLSNNEITYVGNRDLQRCVN), 78-101 (LKTLRLGANEIHTVEEDSFFHLRN), 102-125 (LEYLDLSYNRLSNLSSSWFRSLYV), 126-150 (LKFLNLLGNLYKTLGETSLFSHLPN), 151-175 (LXTLKVGNSNSFTEIHEKDFTGLTF), 176-199 (LEELEISAQNLQIYVPKSLKSIQN), 200-223 (ISHLILHLKQPVLLVDILVDIVSS), 224-250 (LDCLELRDTNLHTFHFSEASISEMSTS), 251-278 (VKKLIFRNVQFTDESFVEVVKLFNYVSG), 279-308 (ILEVEFDDCTHDGIGDFRALSLDRIRHLGN), 309-337 (VETLTIRKLHIPQFFLFHDLSSIYPLTGK), 338-361 (VKRVTIENSKVFLVPCLLSQHLKS), 362-388 (LEYLDLSENLMSEETLKNSACKDAWPF), 389-414 (LQTLVLRQNRLKSLEKTGELLLTLEN), 415-437 (LNSLDISKNNFLSMPETCQWPGK), 438-457 (MKQLNLSSTRIHSLTQCLPQ), 458-478 (TLEILDVSNNNLDSFSLILPQ), 479-500 (LKELYISRNKLKTLPDASFLPV), and 501-524 (LSVMRISRNIINTFSKEQLDSFQQ). An N-linked (GlcNAc...) asparagine glycan is attached at N114. N199 carries an N-linked (GlcNAc...) asparagine glycan. C353 and C382 are joined by a disulfide. C432 and C454 are oxidised to a cystine. N-linked (GlcNAc...) asparagine glycosylation occurs at N442. The LRRCT domain maps to 525-579 (LKTLEAGGNNFICSCDFLSFTQGQQALGRVLVDWPDDYRCDSPSHVRGQRVQDAR). The chain crosses the membrane as a helical span at residues 588–608 (AAVVSAACCALFLVLLLTGVL). Residues 609-784 (CHRFHGLWYM…WLNLRAAIRS (176 aa)) lie on the Cytoplasmic side of the membrane. In terms of domain architecture, TIR spans 639–782 (ICYDAFVSYS…GFWLNLRAAI (144 aa)). A Glycyl lysine isopeptide (Lys-Gly) (interchain with G-Cter in ubiquitin) cross-link involves residue K754. The ATG16L1-binding motif motif lies at 761 to 778 (YLEWPVDETQQEGFWLNL).

It belongs to the Toll-like receptor family. Interacts with LY96, TLR1 and TLR6 (via extracellular domain). TLR2 seems to exist in heterodimers with either TLR1 or TLR6 before stimulation by the ligand. The heterodimers form bigger oligomers in response to their corresponding ligands as well as further heterotypic associations with other receptors such as CD14 and/or CD36. Binds MYD88 (via TIR domain). Interacts with TICAM1. Interacts with CNPY3. Interacts with ATG16L1. Interacts with PPP1R11. Interacts with TICAM2. Interacts with TIRAP. Post-translationally, ubiquitinated at Lys-754 by PPP1R11, leading to its degradation. Deubiquitinated by USP2. In terms of processing, glycosylation of Asn-442 is critical for secretion of the N-terminal ectodomain of TLR2.

It localises to the membrane. It is found in the cytoplasmic vesicle. Its subcellular location is the phagosome membrane. The protein resides in the membrane raft. In terms of biological role, cooperates with LY96 to mediate the innate immune response to bacterial lipoproteins and other microbial cell wall components. Cooperates with TLR1 or TLR6 to mediate the innate immune response to bacterial lipoproteins or lipopeptides. Acts via MYD88 and TRAF6, leading to NF-kappa-B activation, cytokine secretion and the inflammatory response. May also promote apoptosis in response to lipoproteins. Forms activation clusters composed of several receptors depending on the ligand, these clusters trigger signaling from the cell surface and subsequently are targeted to the Golgi in a lipid-raft dependent pathway. Forms the cluster TLR2:TLR6:CD14:CD36 in response to diacylated lipopeptides and TLR2:TLR1:CD14 in response to triacylated lipopeptides. The sequence is that of Toll-like receptor 2 (TLR2) from Bison bison (American bison).